Here is a 468-residue protein sequence, read N- to C-terminus: MSQGKIVQIIGAVVDVEFQRNEVPKVYDALKVEGTAITLEVQQQLGDGVVRTIALGSTDGLKRNLVATNTERAISVPVGAGTLGRIMDVLGRPIDEAGDVQASDHWEIHRSAPSYEDQASTTELLETGIKVIDLMCPFAKGGKVGLFGGAGVGKTVNMMELINNIAKAHSGLSVFAGVGERTREGNDFYHEMKDSNVLDKVAMVYGQMNEPPGNRLRVALTGLTMAEYFRDEKDASGKGKDVLLFVDNIYRYTLAGTEVSALLGRMPSAVGYQPTLAEEMGVLQERITSTKSGSITSIQAVYVPADDLTDPSPATTFAHLDSTVTLSRNIASLGIYPAVDPLDSTSRQMDPLVIGHEHYDTAQRVQQTLQKYKELKDIIAILGMDELSEEDKQSVSRARKIERFFSQPFHVAEVFTGSPGKYVSLKDTIRGFKAICDGEYDHLPEQAFYMVGSIEEAVEKANKMSAKA.

148-155 (GGAGVGKT) contacts ATP.

It belongs to the ATPase alpha/beta chains family. In terms of assembly, F-type ATPases have 2 components, CF(1) - the catalytic core - and CF(0) - the membrane proton channel. CF(1) has five subunits: alpha(3), beta(3), gamma(1), delta(1), epsilon(1). CF(0) has three main subunits: a(1), b(2) and c(9-12). The alpha and beta chains form an alternating ring which encloses part of the gamma chain. CF(1) is attached to CF(0) by a central stalk formed by the gamma and epsilon chains, while a peripheral stalk is formed by the delta and b chains.

The protein resides in the cell inner membrane. It carries out the reaction ATP + H2O + 4 H(+)(in) = ADP + phosphate + 5 H(+)(out). Functionally, produces ATP from ADP in the presence of a proton gradient across the membrane. The catalytic sites are hosted primarily by the beta subunits. This Xanthomonas euvesicatoria pv. vesicatoria (strain 85-10) (Xanthomonas campestris pv. vesicatoria) protein is ATP synthase subunit beta.